The sequence spans 95 residues: Integration host factor subunit beta (95 aa).

Positions 56–95 (RAPRTGRNPKTGETVELDGKHVPHFKPGKELRDRVNESIA) are disordered. Residues 72–95 (LDGKHVPHFKPGKELRDRVNESIA) are compositionally biased toward basic and acidic residues.

Belongs to the bacterial histone-like protein family. In terms of assembly, heterodimer of an alpha and a beta chain.

Functionally, this protein is one of the two subunits of integration host factor, a specific DNA-binding protein that functions in genetic recombination as well as in transcriptional and translational control. The sequence is that of Integration host factor subunit beta from Pseudoalteromonas translucida (strain TAC 125).